A 303-amino-acid chain; its full sequence is Polyisoprenyl-teichoic acid--peptidoglycan teichoic acid transferase TagU (303 aa).

Topologically, residues 1-4 (MKKK) are cytoplasmic. Residues 5–25 (ILFWVLGILGVLIIGGGIYAY) form a helical; Signal-anchor for type II membrane protein membrane-spanning segment. Topologically, residues 26-303 (NVYSSVSNTL…KLRTHLEVTK (278 aa)) are extracellular.

It belongs to the LytR/CpsA/Psr (LCP) family.

It is found in the cell membrane. It participates in cell wall biogenesis. May catalyze the final step in cell wall teichoic acid biosynthesis, the transfer of the anionic cell wall polymers (APs) from their lipid-linked precursor to the cell wall peptidoglycan (PG). This chain is Polyisoprenyl-teichoic acid--peptidoglycan teichoic acid transferase TagU, found in Bacillus cereus (strain ZK / E33L).